The sequence spans 81 residues: Photosystem I iron-sulfur center (81 aa).

4Fe-4S ferredoxin-type domains lie at 2 to 31 and 39 to 68; these read SHSVKIYDTCIGCTQCVRACPTDVLEMIPW and IAPAPRTEDCVGCKRCESACPTDFLSVRVY. The [4Fe-4S] cluster site is built by Cys-11, Cys-14, Cys-17, Cys-21, Cys-48, Cys-51, Cys-54, and Cys-58.

As to quaternary structure, the eukaryotic PSI reaction center is composed of at least 11 subunits. The cofactor is [4Fe-4S] cluster.

It localises to the plastid. Its subcellular location is the chloroplast thylakoid membrane. The enzyme catalyses reduced [plastocyanin] + hnu + oxidized [2Fe-2S]-[ferredoxin] = oxidized [plastocyanin] + reduced [2Fe-2S]-[ferredoxin]. Apoprotein for the two 4Fe-4S centers FA and FB of photosystem I (PSI); essential for photochemical activity. FB is the terminal electron acceptor of PSI, donating electrons to ferredoxin. The C-terminus interacts with PsaA/B/D and helps assemble the protein into the PSI complex. Required for binding of PsaD and PsaE to PSI. PSI is a plastocyanin-ferredoxin oxidoreductase, converting photonic excitation into a charge separation, which transfers an electron from the donor P700 chlorophyll pair to the spectroscopically characterized acceptors A0, A1, FX, FA and FB in turn. This Liriodendron tulipifera (Tuliptree) protein is Photosystem I iron-sulfur center.